The primary structure comprises 488 residues: Probable malate:quinone oxidoreductase (488 aa).

It belongs to the MQO family. It depends on FAD as a cofactor.

The enzyme catalyses (S)-malate + a quinone = a quinol + oxaloacetate. It functions in the pathway carbohydrate metabolism; tricarboxylic acid cycle; oxaloacetate from (S)-malate (quinone route): step 1/1. The protein is Probable malate:quinone oxidoreductase of Neisseria gonorrhoeae (strain ATCC 700825 / FA 1090).